The following is a 160-amino-acid chain: Small ribosomal subunit protein bS6 (160 aa).

Belongs to the bacterial ribosomal protein bS6 family.

Its function is as follows. Binds together with bS18 to 16S ribosomal RNA. The polypeptide is Small ribosomal subunit protein bS6 (Ureaplasma urealyticum serovar 10 (strain ATCC 33699 / Western)).